The following is a 525-amino-acid chain: MTKNIHKHRILILDFGSQYTQLLARRVREIGVYCELWAWDVTEAQIREFNPSGIILSGSPESTIENGSPRAPDYVFTAGVPVLGVCYGMQTMAIQLGGKVESSNQREFGYAQVEIKADSALIRDIKDAINPAGEAVLDVWMSHGDKVAEIPADFVTVASTDTCPFAIMANEEKRFYGVQFHPEVTHTKQGLRLLERFVLGICGCEALWTSATIIEDAIVRLREQIGDDHVILGLSGGVDSSVTAMLLHRAIGKRLTCVFVDNGLLRLNEADQVLEMFGDKFGLNIVHVAAEDRFLSALAGVDEPEAKRKIIGRVFVELFDEEACKQEQVKWLAQGTIYPDVIESAASATGKAHVIKSHHNVGGLPKEMKLGLVEPLKELFKDEVRKIGLELGLPYDMLYRHPFPGPGLGVRVLGEVKKEYCDLLRRADAIFIEELHKADLYNKVSQAFTVFLPVRSVGVMGDGRKYDWVVSLRAVETVDFMTAHWAHLPYDFLGRVSNRIINEVNGISRVVYDISGKPPATIEWE.

The Glutamine amidotransferase type-1 domain maps to 9–207 (RILILDFGSQ…VLGICGCEAL (199 aa)). Cys-86 serves as the catalytic Nucleophile. Residues His-181 and Glu-183 contribute to the active site. A GMPS ATP-PPase domain is found at 208–400 (WTSATIIEDA…LGLPYDMLYR (193 aa)). 235 to 241 (SGGVDSS) lines the ATP pocket.

As to quaternary structure, homodimer.

The catalysed reaction is XMP + L-glutamine + ATP + H2O = GMP + L-glutamate + AMP + diphosphate + 2 H(+). The protein operates within purine metabolism; GMP biosynthesis; GMP from XMP (L-Gln route): step 1/1. In terms of biological role, catalyzes the synthesis of GMP from XMP. This chain is GMP synthase [glutamine-hydrolyzing], found in Yersinia pseudotuberculosis serotype IB (strain PB1/+).